The sequence spans 110 residues: Insulin (110 aa).

An N-terminal signal peptide occupies residues 1–23; the sequence is MALWLQAFTLLVLLVLSSPGAQS. 3 disulfides stabilise this stretch: C30–C96, C42–C109, and C95–C100. Residues 56 to 87 constitute a propeptide, c peptide; sequence DVDPLLGFLSPKSAQENEADEYPYKDQGDLKV.

The protein belongs to the insulin family. In terms of assembly, heterodimer of a B chain and an A chain linked by two disulfide bonds.

It localises to the secreted. Insulin decreases blood glucose concentration. It increases cell permeability to monosaccharides, amino acids and fatty acids. It accelerates glycolysis, the pentose phosphate cycle, and glycogen synthesis in liver. The protein is Insulin (ins) of Pantodon buchholzi (Freshwater butterflyfish).